The primary structure comprises 930 residues: Isoleucine--tRNA ligase (930 aa).

A 'HIGH' region motif is present at residues 57 to 67 (PYANGNIHVGH). Residue Glu554 participates in L-isoleucyl-5'-AMP binding. The 'KMSKS' region motif lies at 595–599 (KMSKS). Residue Lys598 coordinates ATP. 4 residues coordinate Zn(2+): Cys888, Cys891, Cys908, and Cys911.

This sequence belongs to the class-I aminoacyl-tRNA synthetase family. IleS type 1 subfamily. Monomer. The cofactor is Zn(2+).

Its subcellular location is the cytoplasm. The enzyme catalyses tRNA(Ile) + L-isoleucine + ATP = L-isoleucyl-tRNA(Ile) + AMP + diphosphate. Catalyzes the attachment of isoleucine to tRNA(Ile). As IleRS can inadvertently accommodate and process structurally similar amino acids such as valine, to avoid such errors it has two additional distinct tRNA(Ile)-dependent editing activities. One activity is designated as 'pretransfer' editing and involves the hydrolysis of activated Val-AMP. The other activity is designated 'posttransfer' editing and involves deacylation of mischarged Val-tRNA(Ile). This chain is Isoleucine--tRNA ligase, found in Streptococcus pneumoniae (strain JJA).